Reading from the N-terminus, the 444-residue chain is Guanosine nucleotide diphosphate dissociation inhibitor 2 (444 aa).

Belongs to the Rab GDI family. As to expression, expressed in roots and floral buds.

Its function is as follows. Regulates the GDP/GTP exchange reaction of most RAB proteins by inhibiting the dissociation of GDP from them, and the subsequent binding of GTP. This chain is Guanosine nucleotide diphosphate dissociation inhibitor 2 (GDI2), found in Arabidopsis thaliana (Mouse-ear cress).